Here is a 122-residue protein sequence, read N- to C-terminus: Small ribosomal subunit protein uS13 (122 aa).

A disordered region spans residues 95–122; sequence GLPVRGQRTHTNARTRKGPAKSIAGKKK.

It belongs to the universal ribosomal protein uS13 family. In terms of assembly, part of the 30S ribosomal subunit. Forms a loose heterodimer with protein S19. Forms two bridges to the 50S subunit in the 70S ribosome.

Functionally, located at the top of the head of the 30S subunit, it contacts several helices of the 16S rRNA. In the 70S ribosome it contacts the 23S rRNA (bridge B1a) and protein L5 of the 50S subunit (bridge B1b), connecting the 2 subunits; these bridges are implicated in subunit movement. Contacts the tRNAs in the A and P-sites. The polypeptide is Small ribosomal subunit protein uS13 (Rhodopseudomonas palustris (strain BisB18)).